Reading from the N-terminus, the 120-residue chain is Large ribosomal subunit protein bL19 (120 aa).

Belongs to the bacterial ribosomal protein bL19 family.

Its function is as follows. This protein is located at the 30S-50S ribosomal subunit interface and may play a role in the structure and function of the aminoacyl-tRNA binding site. This is Large ribosomal subunit protein bL19 from Chlorobium limicola (strain DSM 245 / NBRC 103803 / 6330).